We begin with the raw amino-acid sequence, 232 residues long: Phosphatidylserine decarboxylase proenzyme (232 aa).

Serine 190 serves as the catalytic Schiff-base intermediate with substrate; via pyruvic acid. The residue at position 190 (serine 190) is a Pyruvic acid (Ser); by autocatalysis.

It belongs to the phosphatidylserine decarboxylase family. PSD-A subfamily. As to quaternary structure, heterodimer of a large membrane-associated beta subunit and a small pyruvoyl-containing alpha subunit. Requires pyruvate as cofactor. Is synthesized initially as an inactive proenzyme. Formation of the active enzyme involves a self-maturation process in which the active site pyruvoyl group is generated from an internal serine residue via an autocatalytic post-translational modification. Two non-identical subunits are generated from the proenzyme in this reaction, and the pyruvate is formed at the N-terminus of the alpha chain, which is derived from the carboxyl end of the proenzyme. The post-translation cleavage follows an unusual pathway, termed non-hydrolytic serinolysis, in which the side chain hydroxyl group of the serine supplies its oxygen atom to form the C-terminus of the beta chain, while the remainder of the serine residue undergoes an oxidative deamination to produce ammonia and the pyruvoyl prosthetic group on the alpha chain.

It is found in the cell membrane. The enzyme catalyses a 1,2-diacyl-sn-glycero-3-phospho-L-serine + H(+) = a 1,2-diacyl-sn-glycero-3-phosphoethanolamine + CO2. Its pathway is phospholipid metabolism; phosphatidylethanolamine biosynthesis; phosphatidylethanolamine from CDP-diacylglycerol: step 2/2. In terms of biological role, catalyzes the formation of phosphatidylethanolamine (PtdEtn) from phosphatidylserine (PtdSer). Important for establishment of root nodule symbiosis with the host plant. The sequence is that of Phosphatidylserine decarboxylase proenzyme from Rhizobium meliloti (strain 1021) (Ensifer meliloti).